Reading from the N-terminus, the 202-residue chain is MPIGVPKVPFRNPGEEGAVWVDVYNRLHRERLLFLGQGVDSEISNQLVGLMVYLSIEDDTRDLYLFINSPGGWVIPGIAIYDTMQFVPPDVHTICMGLAASMGSFLLAGGEITKRLAFPHARVMIHQPASSFYEAQTGEFILEAEELLKLRETITRVYAQRTGNPLWVVFEDMERDVFMSATEAQAHGIVDLVAVENTGDFA.

The active-site Nucleophile is the Ser101. His126 is a catalytic residue.

This sequence belongs to the peptidase S14 family. Component of the chloroplastic Clp protease core complex.

The protein localises to the plastid. Its subcellular location is the chloroplast stroma. It catalyses the reaction Hydrolysis of proteins to small peptides in the presence of ATP and magnesium. alpha-casein is the usual test substrate. In the absence of ATP, only oligopeptides shorter than five residues are hydrolyzed (such as succinyl-Leu-Tyr-|-NHMec, and Leu-Tyr-Leu-|-Tyr-Trp, in which cleavage of the -Tyr-|-Leu- and -Tyr-|-Trp bonds also occurs).. Functionally, cleaves peptides in various proteins in a process that requires ATP hydrolysis. Has a chymotrypsin-like activity. Plays a major role in the degradation of misfolded proteins. The protein is ATP-dependent Clp protease proteolytic subunit of Illicium oligandrum (Star anise).